The sequence spans 3001 residues: BEACH domain-containing protein C2 (3001 aa).

Disordered regions lie at residues 43–80 (DFEQ…SSFG), 103–156 (DVQS…KATV), 1018–1076 (NVLA…NVGS), 1846–1868 (TFSS…PRDK), 2039–2071 (YSGT…SNPP), 2101–2132 (AEEH…RTSN), and 2193–2212 (NLAD…DRSW). The residue at position 48 (Ser-48) is a Phosphoserine. Polar residues-rich tracts occupy residues 57–72 (NESQ…FSNS), 121–132 (SMQQSLSETSLD), and 1037–1050 (SPYN…QLDS). Positions 1854-1863 (LEPPNNNAPP) are enriched in pro residues. The segment covering 2101-2119 (AEEHKRDEGRISGSHEHAS) has biased composition (basic and acidic residues). Residues 2120 to 2129 (RTSAGNSDPR) show a composition bias toward polar residues. One can recognise a BEACH-type PH domain in the interval 2151–2260 (ELDERILLEL…GRRNAYRAIV (110 aa)). Basic and acidic residues predominate over residues 2196–2211 (DHSDESQSGDQEKDRS). The region spanning 2275–2564 (QRPEQLLRRT…QLLTVPHMKR (290 aa)) is the BEACH domain. 5 WD repeats span residues 2679-2718 (SGIR…TLET), 2721-2760 (GHCA…TSRT), 2802-2841 (GHRR…LIRR), 2842-2881 (LVGV…IAKA), and 2953-2992 (GQGQ…LKVV).

This is BEACH domain-containing protein C2 from Arabidopsis thaliana (Mouse-ear cress).